The sequence spans 774 residues: Lysyl oxidase homolog 2 (774 aa).

The signal sequence occupies residues 1-25; the sequence is MERPLCSHLCSCLAVLALLSPLSLA. SRCR domains follow at residues 58–159, 188–302, 326–425, and 435–544; these read LRLA…VVCS, IRAI…VSCV, VRLR…VRCN, and LRLN…VACS. Cystine bridges form between cysteine 84/cysteine 148, cysteine 97/cysteine 158, cysteine 128/cysteine 138, cysteine 218/cysteine 291, cysteine 231/cysteine 301, cysteine 265/cysteine 275, cysteine 351/cysteine 414, cysteine 364/cysteine 424, and cysteine 395/cysteine 405. Residue asparagine 288 is glycosylated (N-linked (GlcNAc...) asparagine). A glycan (N-linked (GlcNAc...) asparagine) is linked at asparagine 455. 3 cysteine pairs are disulfide-bonded: cysteine 464-cysteine 530, cysteine 477-cysteine 543, and cysteine 511-cysteine 521. The lysyl-oxidase like stretch occupies residues 548–751; that stretch reads PDLVLNAEMV…WMYNCHIGGS (204 aa). Ca(2+)-binding residues include aspartate 549 and leucine 550. 4 cysteine pairs are disulfide-bonded: cysteine 573–cysteine 625, cysteine 579–cysteine 695, cysteine 657–cysteine 673, and cysteine 663–cysteine 685. Cu cation is bound by residues histidine 626, histidine 628, and histidine 630. Residue asparagine 644 is glycosylated (N-linked (GlcNAc...) asparagine). The segment at residues 653–689 is a cross-link (lysine tyrosylquinone (Lys-Tyr)); the sequence is KASFCLEDTECEGDIQKNYECANFGDQGITMGCWDMY. 2',4',5'-topaquinone is present on tyrosine 689. Positions 722, 724, 727, and 728 each coordinate Ca(2+). Cysteine 732 and cysteine 746 are disulfide-bonded.

Belongs to the lysyl oxidase family. As to quaternary structure, component of some chromatin repressor complex. Interacts with SNAI1. Interacts with TAF10. Interacts with HSPA5. Interacts with EFEMP2. The cofactor is Cu cation. Lysine tyrosylquinone residue is required as a cofactor. Post-translationally, the lysine tyrosylquinone cross-link (LTQ) is generated by condensation of the epsilon-amino group of a lysine with a topaquinone produced by oxidation of tyrosine. In terms of processing, N-glycosylated. N-glycosylation on Asn-455 and Asn-644 may be essential for proper folding and secretion; may be composed of a fucosylated carbohydrates attached to a trimannose N-linked glycan core.

The protein resides in the secreted. It is found in the extracellular space. It localises to the extracellular matrix. Its subcellular location is the basement membrane. The protein localises to the nucleus. The protein resides in the chromosome. It is found in the endoplasmic reticulum. It carries out the reaction L-lysyl-[protein] + O2 + H2O = (S)-2-amino-6-oxohexanoyl-[protein] + H2O2 + NH4(+). Its activity is regulated as follows. Specifically inhibited by a mouse monoclonal antibody AB0023, inhibition occurs in a non-competitive manner. Functionally, mediates the post-translational oxidative deamination of lysine residues on target proteins leading to the formation of deaminated lysine (allysine). Acts as a transcription corepressor and specifically mediates deamination of trimethylated 'Lys-4' of histone H3 (H3K4me3), a specific tag for epigenetic transcriptional activation. Shows no activity against histone H3 when it is trimethylated on 'Lys-9' (H3K9me3) or 'Lys-27' (H3K27me3) or when 'Lys-4' is monomethylated (H3K4me1) or dimethylated (H3K4me2). Also mediates deamination of methylated TAF10, a member of the transcription factor IID (TFIID) complex, which induces release of TAF10 from promoters, leading to inhibition of TFIID-dependent transcription. LOXL2-mediated deamination of TAF10 results in transcriptional repression of genes required for embryonic stem cell pluripotency including POU5F1/OCT4, NANOG, KLF4 and SOX2. Involved in epithelial to mesenchymal transition (EMT) via interaction with SNAI1 and participates in repression of E-cadherin CDH1, probably by mediating deamination of histone H3. During EMT, involved with SNAI1 in negatively regulating pericentromeric heterochromatin transcription. SNAI1 recruits LOXL2 to pericentromeric regions to oxidize histone H3 and repress transcription which leads to release of heterochromatin component CBX5/HP1A, enabling chromatin reorganization and acquisition of mesenchymal traits. Interacts with the endoplasmic reticulum protein HSPA5 which activates the IRE1-XBP1 pathway of the unfolded protein response, leading to expression of several transcription factors involved in EMT and subsequent EMT induction. When secreted into the extracellular matrix, promotes cross-linking of extracellular matrix proteins by mediating oxidative deamination of peptidyl lysine residues in precursors to fibrous collagen and elastin. Acts as a regulator of sprouting angiogenesis, probably via collagen IV scaffolding. Acts as a regulator of chondrocyte differentiation, probably by regulating expression of factors that control chondrocyte differentiation. This Pongo abelii (Sumatran orangutan) protein is Lysyl oxidase homolog 2 (LOXL2).